The primary structure comprises 356 residues: S-adenosylmethionine:tRNA ribosyltransferase-isomerase (356 aa).

The protein belongs to the QueA family. Monomer.

The protein resides in the cytoplasm. The catalysed reaction is 7-aminomethyl-7-carbaguanosine(34) in tRNA + S-adenosyl-L-methionine = epoxyqueuosine(34) in tRNA + adenine + L-methionine + 2 H(+). The protein operates within tRNA modification; tRNA-queuosine biosynthesis. Functionally, transfers and isomerizes the ribose moiety from AdoMet to the 7-aminomethyl group of 7-deazaguanine (preQ1-tRNA) to give epoxyqueuosine (oQ-tRNA). This chain is S-adenosylmethionine:tRNA ribosyltransferase-isomerase, found in Shigella boydii serotype 4 (strain Sb227).